A 341-amino-acid chain; its full sequence is S-adenosylmethionine:tRNA ribosyltransferase-isomerase (341 aa).

It belongs to the QueA family. Monomer.

Its subcellular location is the cytoplasm. It catalyses the reaction 7-aminomethyl-7-carbaguanosine(34) in tRNA + S-adenosyl-L-methionine = epoxyqueuosine(34) in tRNA + adenine + L-methionine + 2 H(+). It participates in tRNA modification; tRNA-queuosine biosynthesis. Its function is as follows. Transfers and isomerizes the ribose moiety from AdoMet to the 7-aminomethyl group of 7-deazaguanine (preQ1-tRNA) to give epoxyqueuosine (oQ-tRNA). The chain is S-adenosylmethionine:tRNA ribosyltransferase-isomerase from Chlorobium phaeobacteroides (strain DSM 266 / SMG 266 / 2430).